A 298-amino-acid polypeptide reads, in one-letter code: N-acetylmuramic acid 6-phosphate etherase (298 aa).

The SIS domain maps to 55 to 218; sequence IHAQVSGGGR…STGLMIKSGK (164 aa). Glu83 serves as the catalytic Proton donor. Glu114 is an active-site residue.

This sequence belongs to the GCKR-like family. MurNAc-6-P etherase subfamily. In terms of assembly, homodimer.

The enzyme catalyses N-acetyl-D-muramate 6-phosphate + H2O = N-acetyl-D-glucosamine 6-phosphate + (R)-lactate. It participates in amino-sugar metabolism; 1,6-anhydro-N-acetylmuramate degradation. The protein operates within amino-sugar metabolism; N-acetylmuramate degradation. Its pathway is cell wall biogenesis; peptidoglycan recycling. Functionally, specifically catalyzes the cleavage of the D-lactyl ether substituent of MurNAc 6-phosphate, producing GlcNAc 6-phosphate and D-lactate. Together with AnmK, is also required for the utilization of anhydro-N-acetylmuramic acid (anhMurNAc) either imported from the medium or derived from its own cell wall murein, and thus plays a role in cell wall recycling. The sequence is that of N-acetylmuramic acid 6-phosphate etherase from Shigella sonnei (strain Ss046).